The chain runs to 198 residues: Ribonuclease HII (198 aa).

Residues 10 to 198 enclose the RNase H type-2 domain; that stretch reads HLVAGVDEVG…PVKRALGLAS (189 aa). Residues aspartate 16, glutamate 17, and aspartate 108 each coordinate a divalent metal cation.

It belongs to the RNase HII family. Mn(2+) is required as a cofactor. It depends on Mg(2+) as a cofactor.

It localises to the cytoplasm. The catalysed reaction is Endonucleolytic cleavage to 5'-phosphomonoester.. Functionally, endonuclease that specifically degrades the RNA of RNA-DNA hybrids. The polypeptide is Ribonuclease HII (Escherichia coli (strain ATCC 8739 / DSM 1576 / NBRC 3972 / NCIMB 8545 / WDCM 00012 / Crooks)).